The chain runs to 1271 residues: Diacylglycerol kinase kappa (1271 aa).

Over residues 1-15 (MDRGAAAAQGTAPPQ) the composition is skewed to low complexity. The tract at residues 1 to 160 (MDRGAAAAQG…PEPTPEPVTE (160 aa)) is disordered. Residues 23–44 (SPEPPPPWPPPPPPPAPPPAPP) show a composition bias toward pro residues. Tandem repeats lie at residues 48 to 51 (EASP), 52 to 55 (EPIP), 56 to 59 (EPCP), 60 to 63 (ELAP), 64 to 67 (GPCP), 68 to 71 (EATS), 72 to 75 (ESAT), 76 to 79 (ELYT), 80 to 83 (EPTP), 84 to 87 (EPAT), 88 to 91 (EPAS), 92 to 95 (EPAP), 96 to 99 (EPAT), 100 to 103 (EPAP), 104 to 107 (EPAT), 108 to 111 (EPAP), 112 to 115 (EPAP), 116 to 119 (EPAT), 120 to 123 (ESAP), 124 to 127 (EPTP), 128 to 131 (EPAL), 132 to 135 (ESVP), 136 to 139 (EPAP), 140 to 143 (ELTP), 144 to 147 (EVAP), 148 to 151 (ELAP), 152 to 155 (EPTP), 156 to 159 (EPVT), 160 to 163 (ELAP), 164 to 167 (EFCP), 168 to 171 (EAAP), 172 to 175 (EFRP), and 176 to 179 (SPAP). The interval 48–179 (EASPEPIPEP…APEFRPSPAP (132 aa)) is 33 X 4 AA approximate tandem repeats of E-P-A-P. Pro residues predominate over residues 52–66 (EPIPEPCPELAPGPC). The residue at position 78 (Tyr78) is a Phosphotyrosine. Pro residues predominate over residues 82 to 116 (TPEPATEPASEPAPEPATEPAPEPATEPAPEPAPE). Positions 139–149 (PELTPEVAPEL) are enriched in low complexity. The segment at 190–209 (ERGLKTSPSPSPSPSPRTPM) is disordered. Positions 216–309 (KILKEGPMLK…WINIIKTIQQ (94 aa)) constitute a PH domain. Phorbol-ester/DAG-type zinc fingers lie at residues 327 to 377 (MHCW…SKDC) and 398 to 449 (PHQW…SKEC). Residues 487–622 (ACSCPLLIFI…LDRWSVMIRE (136 aa)) enclose the DAGKc domain. Disordered stretches follow at residues 805 to 825 (DDPEDINQTSPRRRSRRGTLS) and 1252 to 1271 (RHREDEAEGDDPLTPSRSQL). The interval 1199–1268 (PIFVPEEKSS…EGDDPLTPSR (70 aa)) is required for localization to the plasma membrane.

This sequence belongs to the eukaryotic diacylglycerol kinase family. As to quaternary structure, does not form homooligomers. Phosphorylated at Tyr-78 by some member of the SRC family in response to H(2)O(2). In terms of tissue distribution, expressed in testis, and to a lesser extent in placenta.

The protein localises to the cell membrane. It carries out the reaction a 1,2-diacyl-sn-glycerol + ATP = a 1,2-diacyl-sn-glycero-3-phosphate + ADP + H(+). The enzyme catalyses 1,2-di-(9Z-octadecenoyl)-sn-glycerol + ATP = 1,2-di-(9Z-octadecenoyl)-sn-glycero-3-phosphate + ADP + H(+). It functions in the pathway lipid metabolism; glycerolipid metabolism. Inhibited in response to H(2)O(2). In terms of biological role, diacylglycerol kinase that converts diacylglycerol/DAG into phosphatidic acid/phosphatidate/PA and regulates the respective levels of these two bioactive lipids. Thereby, acts as a central switch between the signaling pathways activated by these second messengers with different cellular targets and opposite effects in numerous biological processes. This Homo sapiens (Human) protein is Diacylglycerol kinase kappa.